We begin with the raw amino-acid sequence, 429 residues long: Ribosomal RNA small subunit methyltransferase B (429 aa).

S-adenosyl-L-methionine-binding positions include 254 to 260 (CAAPGGK), Asp-277, Asp-303, and Asp-322. Cys-375 acts as the Nucleophile in catalysis.

It belongs to the class I-like SAM-binding methyltransferase superfamily. RsmB/NOP family.

Its subcellular location is the cytoplasm. It catalyses the reaction cytidine(967) in 16S rRNA + S-adenosyl-L-methionine = 5-methylcytidine(967) in 16S rRNA + S-adenosyl-L-homocysteine + H(+). In terms of biological role, specifically methylates the cytosine at position 967 (m5C967) of 16S rRNA. In Escherichia coli O127:H6 (strain E2348/69 / EPEC), this protein is Ribosomal RNA small subunit methyltransferase B.